We begin with the raw amino-acid sequence, 33 residues long: Photosystem II reaction center protein Psb30 (33 aa).

A helical membrane pass occupies residues Leu5 to Leu25.

Belongs to the Psb30/Ycf12 family. PSII is composed of 1 copy each of membrane proteins PsbA, PsbB, PsbC, PsbD, PsbE, PsbF, PsbH, PsbI, PsbJ, PsbK, PsbL, PsbM, PsbT, PsbX, PsbY, PsbZ, Psb30/Ycf12, peripheral proteins of the oxygen-evolving complex and a large number of cofactors. It forms dimeric complexes.

It is found in the plastid. The protein localises to the chloroplast thylakoid membrane. In terms of biological role, a core subunit of photosystem II (PSII), probably helps stabilize the reaction center. The chain is Photosystem II reaction center protein Psb30 from Lepocinclis buetschlii.